Consider the following 825-residue polypeptide: Beta-glucosidase (825 aa).

An N-terminal signal peptide occupies residues 1–20; sequence MLLPLYGLASFLVLSQAALV. Residues Asn21, Asn74, Asn97, Asn230, and Asn271 are each glycosylated (N-linked (GlcNAc...) asparagine). Asp299 is an active-site residue. N-linked (GlcNAc...) asparagine glycans are attached at residues Asn328, Asn335, Asn537, Asn550, Asn556, Asn578, Asn667, Asn690, Asn718, Asn733, and Asn761.

The protein belongs to the glycosyl hydrolase 3 family. In terms of assembly, homotetramer.

It carries out the reaction Hydrolysis of terminal, non-reducing beta-D-glucosyl residues with release of beta-D-glucose.. It functions in the pathway glycan metabolism; cellulose degradation. The sequence is that of Beta-glucosidase from Wickerhamomyces anomalus (Yeast).